The sequence spans 380 residues: Cytochrome b (380 aa).

4 consecutive transmembrane segments (helical) span residues 33 to 53 (LGSLLGTCLVLQIVTGLFLAM), 77 to 98 (WVIRYLHANGASMFFICLFLHI), 113 to 133 (WNIGIILLLATMATAFMGYVL), and 178 to 198 (FFTFHFILPFIITALVALHLL). The heme b site is built by H83 and H97. Residues H182 and H196 each coordinate heme b. H201 contributes to the a ubiquinone binding site. The next 4 membrane-spanning stretches (helical) occupy residues 226–246 (TKDILGLFLLLLTLMSLVLFS), 288–308 (LGGVLALLLSILILMTIPMLH), 320–340 (LSQLTYWLWAANLLTLTWIGG), and 347–367 (FITIGQVTSVLYFITILILVP).

Belongs to the cytochrome b family. The cytochrome bc1 complex contains 11 subunits: 3 respiratory subunits (MT-CYB, CYC1 and UQCRFS1), 2 core proteins (UQCRC1 and UQCRC2) and 6 low-molecular weight proteins (UQCRH/QCR6, UQCRB/QCR7, UQCRQ/QCR8, UQCR10/QCR9, UQCR11/QCR10 and a cleavage product of UQCRFS1). This cytochrome bc1 complex then forms a dimer. Heme b is required as a cofactor.

Its subcellular location is the mitochondrion inner membrane. Functionally, component of the ubiquinol-cytochrome c reductase complex (complex III or cytochrome b-c1 complex) that is part of the mitochondrial respiratory chain. The b-c1 complex mediates electron transfer from ubiquinol to cytochrome c. Contributes to the generation of a proton gradient across the mitochondrial membrane that is then used for ATP synthesis. This chain is Cytochrome b (MT-CYB), found in Nomascus leucogenys (Northern white-cheeked gibbon).